The following is a 709-amino-acid chain: MAAGVDFGDLELFEAFDPPEESTPKPVHTRFKDDEEEEDDDDDENGVGDAELQEQLRRCEATIEQLRAENQELKRKLNILTRPSGILVSNTKIDGPLLQILFMNNAISKQYHQEIEEFVSNLVKRFEEQQKNDVEKTSFSLLPQPSSVMLEEDHKVEESCAVKNNKEAFSVVGSVLYFTNFCLDKLGQPLLNENPQLTEGWEIPKYQQVFSHIVPLEGQEMQVKAKRPKPHCFNCGSEEHQMKECPMPRNAARISEKRKEYMDACGEASGQSFQQRYHAEEVEERFGRFKPGVISEELQDALGVTDKSLPPFIYRMRQLGYPPGWLKEAELENSGLALYDGNDDADGETETGEIQNKNVTYDLSKLVNYPGFNISTPRGIPDEWRMFGSIPMQACQQKDVFASYLNSNIQSPSMRSSGKRSSSQSSPNSPKKQRKEGSAAASPADMELDSDVEIPPGSQSSKAFQFQPPLPPGTPPPLPQGTPPPLFTPPLPKGTPPLTPSDSPQARPAASAMDEDALTLEELEEQQRQIWAALQQAEGGNGDSDVPGDTPLTGNSVASSPCPNEFDLPVPEGKALEKPVLAEPQEPAASVDTAGPEPSCSPAAGAAVLSQREEEAAAEGGPGDALLDNGGVLNMNMSNGSNQQPIHPDSRPPMAPKTHSPVPDMSKFATGITPFEFENMAESTGMYLRIRNLLKNSPRNQQKNKKTCE.

The disordered stretch occupies residues 1 to 47 (MAAGVDFGDLELFEAFDPPEESTPKPVHTRFKDDEEEEDDDDDENGV). An N-acetylalanine modification is found at Ala2. Acidic residues-rich tracts occupy residues 8–20 (GDLE…DPPE) and 34–46 (DEEE…DENG). Residues 48 to 83 (GDAELQEQLRRCEATIEQLRAENQELKRKLNILTRP) are a coiled coil. The CCHC-type zinc finger occupies 230–247 (PHCFNCGSEEHQMKECPM). RBM7 binding stretches follow at residues 289–302 (FKPG…QDAL) and 312–327 (FIYR…GWLK). Disordered regions lie at residues 409 to 518 (IQSP…EDAL) and 533 to 667 (ALQQ…DMSK). A compositionally biased stretch (low complexity) spans 410–430 (QSPSMRSSGKRSSSQSSPNSP). Residues 468 to 499 (PPLPPGTPPPLPQGTPPPLFTPPLPKGTPPLT) are compositionally biased toward pro residues. Phosphothreonine occurs at positions 474, 482, 488, and 495. A compositionally biased stretch (polar residues) spans 552-562 (LTGNSVASSPC). At Ser601 the chain carries Phosphoserine. The span at 635-645 (MNMSNGSNQQP) shows a compositional bias: polar residues. Phosphoserine is present on residues Ser660 and Ser697. Positions 661–709 (PVPDMSKFATGITPFEFENMAESTGMYLRIRNLLKNSPRNQQKNKKTCE) are MTREX binding.

It belongs to the ZCCHC8 family. In terms of assembly, component of a nuclear TRAMP-like complex, an ATP-dependent exosome regulatory complex consisting of a helicase (MTREX), an oligadenylate polymerase (TENT4B or TENT4A), and a substrate specific RNA-binding factor (ZCCHC7 or ZCCHC8). Several TRAMP-like complexes exist with specific compositions and are associated with nuclear, or nucleolar RNA exosomes. Identified in the spliceosome C complex. Component of the nuclear exosome targeting (NEXT) complex composed of MTREX, ZCCHC8, and RBM7 that directs a subset of non-coding short-lived RNAs for exosomal degradation. Interacts with proteins involved in RNA processing and degradation such as MTREX and RBM7; interaction with MTREX enhances MTREX RNA helicase activity and bridges between RBM7 and MTREX. Interacts with TERC, the telomerase RNA component. In terms of processing, phosphorylation at Thr-495 by GSK3 is triggered in cells entering mitosis.

It localises to the nucleus. The protein resides in the nucleoplasm. Scaffolding subunit of the trimeric nuclear exosome targeting (NEXT) complex that is involved in the surveillance and turnover of aberrant transcripts and non-coding RNAs. NEXT functions as an RNA exosome cofactor that directs a subset of non-coding short-lived RNAs for exosomal degradation. May be involved in pre-mRNA splicing. It is required for 3'-end maturation of telomerase RNA component (TERC), TERC 3'-end targeting to the nuclear RNA exosome, and for telomerase function. The protein is Zinc finger CCHC domain-containing protein 8 (Zcchc8) of Mus musculus (Mouse).